Reading from the N-terminus, the 187-residue chain is Peptidoglycan-recognition protein 3 (187 aa).

A signal peptide spans 1–19; it reads MKAFLVALLISIELALVFA. Cystine bridges form between Cys21/Cys144 and Cys58/Cys64. The N-acetylmuramoyl-L-alanine amidase domain occupies 43 to 170; that stretch reads KPLKYVIINH…RTIRQTNSPG (128 aa). N-linked (GlcNAc...) asparagine glycosylation is present at Asn51.

The protein belongs to the N-acetylmuramoyl-L-alanine amidase 2 family.

The protein localises to the secreted. Its function is as follows. Peptidoglycan-recognition protein probably involved in innate immunity by binding to peptidoglycans (PGN) of bacteria and activating the prophenoloxidase (proPO) cascade immune response. Binds to 1,3-beta-D-glucan and PGN. The protein is Peptidoglycan-recognition protein 3 (PGRP-3) of Holotrichia diomphalia (Korean black chafer).